A 191-amino-acid chain; its full sequence is GDP-mannose pyrophosphatase (191 aa).

GDP-alpha-D-mannose is bound by residues tyrosine 17, 38–40 (KRE), arginine 67, and 85–87 (AGL). Residues 43–180 (DRGNGATILL…EIRDGKTVLL (138 aa)) form the Nudix hydrolase domain. Residues alanine 85, glutamate 100, and glutamate 104 each coordinate Mg(2+). The short motif at 86-106 (GLLDNDEPEVCIRKEAIEETG) is the Nudix box element. GDP-alpha-D-mannose is bound by residues glutamate 104, glutamate 127, 150-151 (DE), and lysine 176. Glutamate 151 lines the Mg(2+) pocket.

The protein belongs to the Nudix hydrolase family. NudK subfamily. In terms of assembly, homodimer. Mg(2+) serves as cofactor.

It carries out the reaction GDP-alpha-D-mannose + H2O = alpha-D-mannose 1-phosphate + GMP + 2 H(+). In terms of biological role, nucleoside diphosphate sugar hydrolase that hydrolyzes GDP-mannose as its preferred substrate, yielding GMP and mannose-1-phosphate. This is GDP-mannose pyrophosphatase (nudK) from Salmonella arizonae (strain ATCC BAA-731 / CDC346-86 / RSK2980).